A 132-amino-acid chain; its full sequence is Small ribosomal subunit protein uS8 (132 aa).

The protein belongs to the universal ribosomal protein uS8 family. Part of the 30S ribosomal subunit. Contacts proteins S5 and S12.

In terms of biological role, one of the primary rRNA binding proteins, it binds directly to 16S rRNA central domain where it helps coordinate assembly of the platform of the 30S subunit. This is Small ribosomal subunit protein uS8 from Streptococcus suis (strain 98HAH33).